The sequence spans 129 residues: NADH-quinone oxidoreductase subunit A (129 aa).

Transmembrane regions (helical) follow at residues 14–34 (LAIHVALSAGIVAAIIVVAAW), 67–87 (FLIAALFVIFDMEAAILFAWA), and 95–115 (WLGLIEAAVFIGVLLLALVYL).

This sequence belongs to the complex I subunit 3 family. In terms of assembly, NDH-1 is composed of 14 different subunits. Subunits NuoA, H, J, K, L, M, N constitute the membrane sector of the complex.

It localises to the cell inner membrane. The enzyme catalyses a quinone + NADH + 5 H(+)(in) = a quinol + NAD(+) + 4 H(+)(out). NDH-1 shuttles electrons from NADH, via FMN and iron-sulfur (Fe-S) centers, to quinones in the respiratory chain. The immediate electron acceptor for the enzyme in this species is believed to be ubiquinone. Couples the redox reaction to proton translocation (for every two electrons transferred, four hydrogen ions are translocated across the cytoplasmic membrane), and thus conserves the redox energy in a proton gradient. The sequence is that of NADH-quinone oxidoreductase subunit A from Rhodopseudomonas palustris (strain ATCC BAA-98 / CGA009).